A 547-amino-acid chain; its full sequence is Chaperonin GroEL (547 aa).

ATP is bound by residues 30-33 (TLGP), K51, 87-91 (DGTTT), G415, and D496.

Belongs to the chaperonin (HSP60) family. Forms a cylinder of 14 subunits composed of two heptameric rings stacked back-to-back. Interacts with the co-chaperonin GroES.

Its subcellular location is the cytoplasm. The enzyme catalyses ATP + H2O + a folded polypeptide = ADP + phosphate + an unfolded polypeptide.. Its function is as follows. Together with its co-chaperonin GroES, plays an essential role in assisting protein folding. The GroEL-GroES system forms a nano-cage that allows encapsulation of the non-native substrate proteins and provides a physical environment optimized to promote and accelerate protein folding. The chain is Chaperonin GroEL from Chlorobium phaeobacteroides (strain DSM 266 / SMG 266 / 2430).